We begin with the raw amino-acid sequence, 291 residues long: MSEKLQKVLARAGHGSRREIESIIEAGRVSVDGKIATLGDRVEVTPGLKIRIDGHLISVKESAEQICRVLAYYKPEGELCTRNDPEGRPTVFDRLPKLRGARWIAVGRLDVNTCGLLLFTTDGELANRLMHPSREVEREYAVRVFGQVDESKLRDLSRGVQLEDGPAAFKTIKFSGGEGINQWYNVTLTEGRNREVRRLWEAVGVQVSRLIRVRYGDIPLPKGLPRGGWTELDFAQTNYLRGLVELPPETSSKVAVEKDRRRMKANQIRRAVKRHSQIAGGRRSGGRNNNG.

The 61-residue stretch at 3-63 (EKLQKVLARA…GHLISVKESA (61 aa)) folds into the S4 RNA-binding domain. Asp-110 serves as the catalytic Nucleophile. A disordered region spans residues 272-291 (VKRHSQIAGGRRSGGRNNNG).

This sequence belongs to the pseudouridine synthase RsuA family.

It carries out the reaction uridine(2605) in 23S rRNA = pseudouridine(2605) in 23S rRNA. In terms of biological role, responsible for synthesis of pseudouridine from uracil-2605 in 23S ribosomal RNA. The chain is Ribosomal large subunit pseudouridine synthase B (rluB) from Salmonella typhi.